Consider the following 334-residue polypeptide: Aromatic O-demethylase, reductase subunit (334 aa).

Positions 1-91 (MTFAVSVGGR…DTEVRSTADA (91 aa)) constitute a 2Fe-2S ferredoxin-type domain. [2Fe-2S] cluster is bound by residues Cys-35, Cys-40, Cys-43, and Cys-75. The FAD-binding FR-type domain occupies 98-198 (LRDLTATVLE…TGPLGDFHLP (101 aa)). Residues 145–148 (RQYS), 162–164 (HVR), 170–172 (VAT), Thr-215, Phe-330, and Ser-334 each bind FAD.

As to quaternary structure, monomer. Forms a heterodimer with GcoA. The cofactor is FAD. Requires [2Fe-2S] cluster as cofactor.

It carries out the reaction 2 oxidized [cytochrome P450] + NADH = 2 reduced [cytochrome P450] + NAD(+) + H(+). It participates in aromatic compound metabolism. Functionally, part of a two-component P450 system that efficiently O-demethylates diverse aromatic substrates such as guaiacol and a wide variety of lignin-derived monomers. Is likely involved in lignin degradation, allowing Amycolatopsis sp. ATCC 39116 to catabolize plant biomass. GcoB transfers electrons from NADH to the cytochrome P450 subunit GcoA. Highly prefers NADH over NADPH as the electron donor. This is Aromatic O-demethylase, reductase subunit from Amycolatopsis sp. (strain ATCC 39116 / 75iv2).